Here is a 473-residue protein sequence, read N- to C-terminus: MKILYSLRRFYHVETLFNGTLALAGRDQETTGFAWWAGNARLINLSGKLLGAHVAHAGLIVFWAGGMNLFEVAHFVPEKPMYEQGLILLPHLATLGWGVGPGGEVIDTFPYFVSGVLHLISSAVLGFGGIYHALLGPETLEESFPFFGYVWKDRNKMTTILGIHLILLGLGAFLLVFKALYFGGVYDTWAPGGGDVRKITNLTLNPSVIFGYLLKSPFGGEGWIVSVDDLEDIIGGHVWLGSICILGGIWHILTKPFAWARRAFVWSGEAYLSYSLAALSVFGFIACCFVWFNNTAYPSEFYGPTGPEASQAQAFTFLVRDQRLGANVGSAQGPTGLGKYLMRSPTGEIIFGGETMRFWDLRAPWLEPLRGPNGLDLSRLKKDIQPWQERRSAEYMTHAPLGSLNSVGGVATEINAVNYVSPRSWLSTSHFVLGFFFFVGHLWHAGRARAAAAGFEKGIDRDLEPVLFMTPLS.

A propeptide spanning residues 1-14 (MKILYSLRRFYHVE) is cleaved from the precursor. Threonine 15 carries the post-translational modification N-acetylthreonine. A Phosphothreonine modification is found at threonine 15. The next 5 membrane-spanning stretches (helical) occupy residues 69 to 93 (LFEV…PHLA), 134 to 155 (LLGP…KDRN), 178 to 200 (KALY…RKIT), 255 to 275 (KPFA…LSYS), and 291 to 312 (WFNN…ASQA). Position 367 (glutamate 367) interacts with [CaMn4O5] cluster. The chain crosses the membrane as a helical span at residues 447 to 471 (RARAAAAGFEKGIDRDLEPVLFMTP).

The protein belongs to the PsbB/PsbC family. PsbC subfamily. PSII is composed of 1 copy each of membrane proteins PsbA, PsbB, PsbC, PsbD, PsbE, PsbF, PsbH, PsbI, PsbJ, PsbK, PsbL, PsbM, PsbT, PsbX, PsbY, PsbZ, Psb30/Ycf12, at least 3 peripheral proteins of the oxygen-evolving complex and a large number of cofactors. It forms dimeric complexes. The cofactor is Binds multiple chlorophylls and provides some of the ligands for the Ca-4Mn-5O cluster of the oxygen-evolving complex. It may also provide a ligand for a Cl- that is required for oxygen evolution. PSII binds additional chlorophylls, carotenoids and specific lipids..

It is found in the plastid. It localises to the chloroplast thylakoid membrane. Its function is as follows. One of the components of the core complex of photosystem II (PSII). It binds chlorophyll and helps catalyze the primary light-induced photochemical processes of PSII. PSII is a light-driven water:plastoquinone oxidoreductase, using light energy to abstract electrons from H(2)O, generating O(2) and a proton gradient subsequently used for ATP formation. The sequence is that of Photosystem II CP43 reaction center protein from Lemna minor (Common duckweed).